The chain runs to 302 residues: NmrA-like family domain-containing protein DDB_G0286605 (302 aa).

NADP(+) contacts are provided by residues 9–14 (GGTGYQ), 35–39 (RNPES), 56–57 (DE), 78–80 (TNS), lysine 130, and 157–160 (YFQN).

The protein belongs to the NmrA-type oxidoreductase family.

Functionally, may be a redox sensor protein. The protein is NmrA-like family domain-containing protein DDB_G0286605 of Dictyostelium discoideum (Social amoeba).